The chain runs to 368 residues: Spermidine/putrescine import ATP-binding protein PotA (368 aa).

The 231-residue stretch at 8–238 (IELKNVSKIF…PVNLFVARFV (231 aa)) folds into the ABC transporter domain. ATP is bound at residue 40 to 47 (GPSGCGKT).

Belongs to the ABC transporter superfamily. Spermidine/putrescine importer (TC 3.A.1.11.1) family. As to quaternary structure, the complex is composed of two ATP-binding proteins (PotA), two transmembrane proteins (PotB and PotC) and a solute-binding protein (PotD).

It localises to the cell membrane. The enzyme catalyses ATP + H2O + polyamine-[polyamine-binding protein]Side 1 = ADP + phosphate + polyamineSide 2 + [polyamine-binding protein]Side 1.. Its function is as follows. Part of the ABC transporter complex PotABCD involved in spermidine/putrescine import. Responsible for energy coupling to the transport system. The polypeptide is Spermidine/putrescine import ATP-binding protein PotA (Lawsonia intracellularis (strain PHE/MN1-00)).